A 227-amino-acid polypeptide reads, in one-letter code: Orotidine 5'-phosphate decarboxylase (227 aa).

Residues aspartate 8, lysine 30, 57 to 66, threonine 116, arginine 177, glutamine 186, glycine 206, and arginine 207 each bind substrate; that span reads DLKFHDIPNT. Lysine 59 functions as the Proton donor in the catalytic mechanism.

The protein belongs to the OMP decarboxylase family. Type 1 subfamily. As to quaternary structure, homodimer.

The catalysed reaction is orotidine 5'-phosphate + H(+) = UMP + CO2. The protein operates within pyrimidine metabolism; UMP biosynthesis via de novo pathway; UMP from orotate: step 2/2. Functionally, catalyzes the decarboxylation of orotidine 5'-monophosphate (OMP) to uridine 5'-monophosphate (UMP). The polypeptide is Orotidine 5'-phosphate decarboxylase (Acinetobacter baylyi (strain ATCC 33305 / BD413 / ADP1)).